A 141-amino-acid chain; its full sequence is Aspartate 1-decarboxylase 1 (141 aa).

The active-site Schiff-base intermediate with substrate; via pyruvic acid is the S25. S25 bears the Pyruvic acid (Ser) mark. T57 lines the substrate pocket. The Proton donor role is filled by Y58. Residue 73–75 coordinates substrate; it reads GPA.

This sequence belongs to the PanD family. In terms of assembly, heterooctamer of four alpha and four beta subunits. It depends on pyruvate as a cofactor. Is synthesized initially as an inactive proenzyme, which is activated by self-cleavage at a specific serine bond to produce a beta-subunit with a hydroxyl group at its C-terminus and an alpha-subunit with a pyruvoyl group at its N-terminus.

The protein resides in the cytoplasm. The catalysed reaction is L-aspartate + H(+) = beta-alanine + CO2. The protein operates within cofactor biosynthesis; (R)-pantothenate biosynthesis; beta-alanine from L-aspartate: step 1/1. Its function is as follows. Catalyzes the pyruvoyl-dependent decarboxylation of aspartate to produce beta-alanine. This chain is Aspartate 1-decarboxylase 1, found in Paenarthrobacter aurescens (strain TC1).